The primary structure comprises 495 residues: Trimethylamine methyltransferase MttB1 (495 aa).

O334 is a non-standard amino acid (pyrrolysine).

The protein belongs to the trimethylamine methyltransferase family. Can form a complex with MttC.

The catalysed reaction is Co(I)-[trimethylamine-specific corrinoid protein] + trimethylamine + H(+) = methyl-Co(III)-[trimethylamine-specific corrinoid protein] + dimethylamine. It functions in the pathway one-carbon metabolism; methanogenesis from trimethylamine. Catalyzes the transfer of a methyl group from trimethylamine to the corrinoid cofactor of MttC. The polypeptide is Trimethylamine methyltransferase MttB1 (mttB1) (Methanosarcina mazei (strain ATCC BAA-159 / DSM 3647 / Goe1 / Go1 / JCM 11833 / OCM 88) (Methanosarcina frisia)).